Reading from the N-terminus, the 394-residue chain is Flavohemoprotein (394 aa).

In terms of domain architecture, Globin spans 1–136; the sequence is MISQQTIDIV…LANVFITREE (136 aa). Residue histidine 85 participates in heme b binding. Catalysis depends on charge relay system residues tyrosine 95 and glutamate 135. The segment at 147–394 is reductase; sequence GGWRGTREFT…YECFGPHKVL (248 aa). The FAD-binding FR-type domain maps to 150–255; sequence RGTREFTLIE…AAPAGDFFLD (106 aa). FAD-binding positions include tyrosine 188 and 204–207; that span reads RQYS. 268 to 273 is an NADP(+) binding site; the sequence is GVGLTP. 387 to 390 provides a ligand contact to FAD; the sequence is CFGP.

Belongs to the globin family. Two-domain flavohemoproteins subfamily. This sequence in the C-terminal section; belongs to the flavoprotein pyridine nucleotide cytochrome reductase family. Requires heme b as cofactor. The cofactor is FAD.

The enzyme catalyses 2 nitric oxide + NADPH + 2 O2 = 2 nitrate + NADP(+) + H(+). It catalyses the reaction 2 nitric oxide + NADH + 2 O2 = 2 nitrate + NAD(+) + H(+). Is involved in NO detoxification in an aerobic process, termed nitric oxide dioxygenase (NOD) reaction that utilizes O(2) and NAD(P)H to convert NO to nitrate, which protects the bacterium from various noxious nitrogen compounds. Therefore, plays a central role in the inducible response to nitrosative stress. This chain is Flavohemoprotein, found in Photobacterium profundum (strain SS9).